The primary structure comprises 821 residues: Nitrogen permease regulator 3 (821 aa).

Positions 1–21 are cleaved as a signal peptide; sequence MSLNLPNPSILGILLVVSTHS. Disordered stretches follow at residues 29–64, 116–194, 246–283, and 654–694; these read YPPDLSNDSKKSSNLKRTNKTSTLQRKDSDSDELDI, RQTS…GIPP, GSWKSKHSHRPKSGKSSKGRSKNAADNASIDEGIDYET, and ENEG…PEDI. Basic and acidic residues predominate over residues 116–142; sequence RQTSQERNKIYGHKQSDSHIDPDEIKS. The span at 170 to 192 shows a compositional bias: low complexity; it reads KKTISSISDSQKSSTSKASTSGI. A compositionally biased stretch (basic residues) spans 249–266; it reads KSKHSHRPKSGKSSKGRS. Over residues 669 to 688 the composition is skewed to polar residues; it reads ADPNISNKLNAGTDNTSKTE.

Belongs to the NPR3 family.

Mediates inactivation of the TORC1 complex in response to amino acid starvation. Required for meiotic nuclear division. In Debaryomyces hansenii (strain ATCC 36239 / CBS 767 / BCRC 21394 / JCM 1990 / NBRC 0083 / IGC 2968) (Yeast), this protein is Nitrogen permease regulator 3 (NPR3).